The sequence spans 364 residues: tRNA N6-adenosine threonylcarbamoyltransferase (364 aa).

Fe cation contacts are provided by His-118 and His-122. Substrate-binding positions include 140–144 (LVSGG), Asp-173, Gly-186, and Asn-288. Residue Asp-316 coordinates Fe cation.

It belongs to the KAE1 / TsaD family. Fe(2+) is required as a cofactor.

The protein resides in the cytoplasm. The enzyme catalyses L-threonylcarbamoyladenylate + adenosine(37) in tRNA = N(6)-L-threonylcarbamoyladenosine(37) in tRNA + AMP + H(+). Its function is as follows. Required for the formation of a threonylcarbamoyl group on adenosine at position 37 (t(6)A37) in tRNAs that read codons beginning with adenine. Is involved in the transfer of the threonylcarbamoyl moiety of threonylcarbamoyl-AMP (TC-AMP) to the N6 group of A37, together with TsaE and TsaB. TsaD likely plays a direct catalytic role in this reaction. This chain is tRNA N6-adenosine threonylcarbamoyltransferase, found in Cereibacter sphaeroides (strain KD131 / KCTC 12085) (Rhodobacter sphaeroides).